Consider the following 41-residue polypeptide: Photosystem I reaction center subunit IX (41 aa).

A helical membrane pass occupies residues 7 to 27; sequence YLSTAPVLLTIWLTFTAGFII.

The protein belongs to the PsaJ family.

Its subcellular location is the plastid. It localises to the chloroplast thylakoid membrane. May help in the organization of the PsaE and PsaF subunits. This chain is Photosystem I reaction center subunit IX, found in Phaeodactylum tricornutum (strain CCAP 1055/1).